Reading from the N-terminus, the 54-residue chain is Snake venom 5'-nucleotidase (54 aa).

2 residues coordinate Zn(2+): aspartate 11 and histidine 13. Asparagine 46 is a glycosylation site (N-linked (GlcNAc...) asparagine).

The protein belongs to the 5'-nucleotidase family. Zn(2+) is required as a cofactor. Venom 5'-nucleotidases (or a part thereof) may be released into the venom via exosome-like vesicles. They may be attached via a GPI anchor to the membrane of these vesicles. Soluble forms of 5'-nucleotidase might be released by cleavage of the ectodomain in the exosome-like vesicles or venom gland cells. In terms of tissue distribution, expressed by the venom gland.

The protein resides in the membrane. The catalysed reaction is a ribonucleoside 5'-phosphate + H2O = a ribonucleoside + phosphate. Functionally, hydrolyzes nucleotides into nucleosides. Snake venom 5'-nucleotidases are widely distributed among venomous snake taxa, but there is a lack of information about their biological activities. They have been shown to inhibit platelet aggregation. This effect may be due to the liberation of inhibitory AMP or adenosine by its action on ADP released upon initiation of aggregation. Venom 5'-nucleotidases are also known to synergistically act in vivo with other toxins like ADPases, phospholipases, and disintegrins to exert a more pronounced anti-coagulant effect. The sequence is that of Snake venom 5'-nucleotidase from Gloydius blomhoffii blomhoffii (Japanese mamushi).